The chain runs to 409 residues: MDFYSNLDSRSLDSETPTLFEIISAQELEKLLTPSIRYILVHYTQRYPRYLLKVANHFDELNLAIRGFIEFRQLSHWNSTFIDKFYGLKKVRNHQTISTERLQSQVPTLLEQRRRLSKTQIAVSLFEIVGVPYLRDKLDHLYDKLYPKLMMNNLDPKESLKTFVQYYFLKLYPILLSVLTTIQVLLQVLYLSGTFKSPSIIMWLFKMKYARLNSYDYTLDEQRVNKFLNKTSPGKLGTGNNRIRPITLTESLYLLYSDLTRPLKKGLLITGGTLFPASIFLLKFLEWWNSSDFATKMNKPRNPFSDSELPPPINLSKDLLADRKIKKLLKKSQSNDGTCPLCHKQITNPAVIETGYVFCYTCIFKHLTSSELDEETGGRCPITGRRLLGCRINKTTGEWTVDGIRRLMM.

Over Met1 to Thr18 the chain is Peroxisomal matrix. A helical transmembrane segment spans residues Leu19–Arg46. The Cytoplasmic portion of the chain corresponds to Tyr47–Tyr50. A helical membrane pass occupies residues Leu51–Ser75. The Peroxisomal matrix portion of the chain corresponds to His76–Ser117. Residues Lys118–Asn152 form a helical membrane-spanning segment. Residues Asn153–Asp155 are Cytoplasmic-facing. Residues Pro156–Ser192 traverse the membrane as a helical segment. The Peroxisomal matrix portion of the chain corresponds to Gly193–Thr273. Residues Leu274–Arg301 traverse the membrane as a helical segment. At Asn302–Met409 the chain is on the cytoplasmic side. Zn(2+) is bound by residues Cys339, Cys342, Cys359, and Cys362. The RING-type; degenerate zinc finger occupies Cys339–Gly384.

The protein belongs to the pex2/pex10/pex12 family. As to quaternary structure, component of the PEX2-PEX10-PEX12 retrotranslocation channel, composed of PEX2, PEX10 and PEX12.

Its subcellular location is the peroxisome membrane. It participates in protein modification; protein ubiquitination. Component of a retrotranslocation channel required for peroxisome organization by mediating export of the PEX5 and/or PEX20 receptors from peroxisomes to the cytosol, thereby promoting PEX5 and PEX20 recycling. The retrotranslocation channel is composed of PEX2, PEX10 and PEX12; each subunit contributing transmembrane segments that coassemble into an open channel that specifically allows the passage of PEX5 and/or PEX20 through the peroxisomal membrane. PEX12 also regulates PEX5 and/or PEX20 recycling by activating the E3 ubiquitin-protein ligase activity of PEX10. When PEX5 or PEX20 recycling is compromised, PEX12 stimulates PEX10-mediated polyubiquitination of PEX5 and/or PEX20, leading to its subsequent degradation. This Komagataella pastoris (Yeast) protein is Peroxisome assembly protein 12 (PEX12).